The sequence spans 181 residues: Trafficking protein particle complex subunit 3 homolog (181 aa).

The S-palmitoyl cysteine moiety is linked to residue Cys-70.

This sequence belongs to the TRAPP small subunits family. BET3 subfamily. As to quaternary structure, homodimer. Part of the multisubunit TRAPP (transport protein particle) complex.

The protein localises to the golgi apparatus. It is found in the cis-Golgi network. Its subcellular location is the endoplasmic reticulum. Its function is as follows. May play a role in vesicular transport from endoplasmic reticulum to Golgi. Required for the systemic spread of the RNAi response. The polypeptide is Trafficking protein particle complex subunit 3 homolog (trpp-3) (Caenorhabditis elegans).